The primary structure comprises 245 residues: DNA polymerase sliding clamp 1 (245 aa).

Belongs to the PCNA family. Homotrimer. The subunits circularize to form a toroid; DNA passes through its center. Replication factor C (RFC) is required to load the toroid on the DNA.

In terms of biological role, sliding clamp subunit that acts as a moving platform for DNA processing. Responsible for tethering the catalytic subunit of DNA polymerase and other proteins to DNA during high-speed replication. The chain is DNA polymerase sliding clamp 1 from Sulfurisphaera ohwakuensis.